Reading from the N-terminus, the 392-residue chain is Probable protein phosphatase 2C 22 (392 aa).

The segment at 1–26 (MEETRGISDPENGSSSYGGKPPNPLS) is disordered. One can recognise a PPM-type phosphatase domain in the interval 89–356 (RSGAWSDIGS…DNVTAVVVCL (268 aa)). Positions 133, 134, 304, and 347 each coordinate Mn(2+).

It belongs to the PP2C family. Mg(2+) is required as a cofactor. It depends on Mn(2+) as a cofactor.

It catalyses the reaction O-phospho-L-seryl-[protein] + H2O = L-seryl-[protein] + phosphate. It carries out the reaction O-phospho-L-threonyl-[protein] + H2O = L-threonyl-[protein] + phosphate. The polypeptide is Probable protein phosphatase 2C 22 (Arabidopsis thaliana (Mouse-ear cress)).